We begin with the raw amino-acid sequence, 287 residues long: Beta-lactamase GES-1 (287 aa).

Residues 1–18 (MRFIHALLLAGIAHSAYA) form the signal peptide. A disulfide bridge links Cys-63 with Cys-233. Catalysis depends on Ser-64, which acts as the Nucleophile; acyl-ester intermediate. A beta-lactam contacts are provided by Lys-67, Ser-125, Glu-161, and Thr-232.

It belongs to the class-A beta-lactamase family. In terms of assembly, monomer. May form dimers.

The enzyme catalyses a beta-lactam + H2O = a substituted beta-amino acid. Its activity is regulated as follows. Inhibited by the beta-lactamase-blocking agents clavulanic acid, tazobactam, sulbactam and tazobactam and the carbapenem, imipenem. Inhibition by imipenem may involve Gly-165. Its function is as follows. Extended-spectrum beta-lactamase (ESBL) which confers resistance to penicillins, as well as first, second, third and fourth-generation cephalosporins. Has ceftazidime-hydrolyzing activity. Inactive against the carbapenems, imipenem, meropenem, ertapenem and doripenem. However, weak hydrolytic activity with respect to imipenem has also been reported. The protein is Beta-lactamase GES-1 of Klebsiella pneumoniae.